A 104-amino-acid polypeptide reads, in one-letter code: Astakine (104 aa).

An N-terminal signal peptide occupies residues 1–22 (MKMRGVSVGVLVVAMMSGLAMA). 5 disulfides stabilise this stretch: Cys25/Cys38, Cys32/Cys50, Cys37/Cys76, Cys60/Cys84, and Cys78/Cys91.

Belongs to the AVIT (prokineticin) family.

It is found in the secreted. Its function is as follows. Cytokine directly involved in hematopoiesis. This Pacifastacus leniusculus (Signal crayfish) protein is Astakine.